A 213-amino-acid polypeptide reads, in one-letter code: Chloramphenicol acetyltransferase 2 (213 aa).

Histidine 189 functions as the Proton acceptor in the catalytic mechanism.

The protein belongs to the chloramphenicol acetyltransferase family. Homotrimer.

The catalysed reaction is chloramphenicol + acetyl-CoA = chloramphenicol 3-acetate + CoA. Its function is as follows. This enzyme is an effector of chloramphenicol resistance in bacteria. This Escherichia coli protein is Chloramphenicol acetyltransferase 2 (cmlA).